The following is a 262-amino-acid chain: MSTHSNHPFHLVDYSPWPLTGAIGAMTTVSGMVKWFHQYDISLFVLGNIITILTVYQWWRDVSREGTYQGLHTYAVTIGLRWGMILFILSEVLFFVSFFWAFFHSSLSPAIELGASWPPMGIISFNPFQIPLLNTAILLASGVTVTWAHHSLMENNHSQTTQGLFFTVLLGIYFTILQAYEYIEAPFTIADSIYGSTFFMATGFHGIHVLIGTTFLLVCLLRHLNNHFSKNHHFGFEAAAWYWHFVDVVWLFLYITIYWWGG.

6 consecutive transmembrane segments (helical) span residues 39-59 (YDIS…YQWW), 83-103 (GMIL…WAFF), 120-140 (MGII…ILLA), 163-183 (GLFF…YEYI), 198-218 (FFMA…FLLV), and 240-260 (AWYW…IYWW).

The protein belongs to the cytochrome c oxidase subunit 3 family. As to quaternary structure, component of the cytochrome c oxidase (complex IV, CIV), a multisubunit enzyme composed of a catalytic core of 3 subunits and several supernumerary subunits. The complex exists as a monomer or a dimer and forms supercomplexes (SCs) in the inner mitochondrial membrane with ubiquinol-cytochrome c oxidoreductase (cytochrome b-c1 complex, complex III, CIII).

It is found in the mitochondrion inner membrane. It carries out the reaction 4 Fe(II)-[cytochrome c] + O2 + 8 H(+)(in) = 4 Fe(III)-[cytochrome c] + 2 H2O + 4 H(+)(out). In terms of biological role, component of the cytochrome c oxidase, the last enzyme in the mitochondrial electron transport chain which drives oxidative phosphorylation. The respiratory chain contains 3 multisubunit complexes succinate dehydrogenase (complex II, CII), ubiquinol-cytochrome c oxidoreductase (cytochrome b-c1 complex, complex III, CIII) and cytochrome c oxidase (complex IV, CIV), that cooperate to transfer electrons derived from NADH and succinate to molecular oxygen, creating an electrochemical gradient over the inner membrane that drives transmembrane transport and the ATP synthase. Cytochrome c oxidase is the component of the respiratory chain that catalyzes the reduction of oxygen to water. Electrons originating from reduced cytochrome c in the intermembrane space (IMS) are transferred via the dinuclear copper A center (CU(A)) of subunit 2 and heme A of subunit 1 to the active site in subunit 1, a binuclear center (BNC) formed by heme A3 and copper B (CU(B)). The BNC reduces molecular oxygen to 2 water molecules using 4 electrons from cytochrome c in the IMS and 4 protons from the mitochondrial matrix. This chain is Cytochrome c oxidase subunit 3 (mt:CoIII), found in Drosophila melanogaster (Fruit fly).